The primary structure comprises 130 residues: Small ribosomal subunit protein uS11 (130 aa).

The protein belongs to the universal ribosomal protein uS11 family. In terms of assembly, part of the 30S ribosomal subunit. Interacts with proteins S7 and S18. Binds to IF-3.

Functionally, located on the platform of the 30S subunit, it bridges several disparate RNA helices of the 16S rRNA. Forms part of the Shine-Dalgarno cleft in the 70S ribosome. This chain is Small ribosomal subunit protein uS11, found in Prochlorococcus marinus (strain MIT 9211).